Consider the following 300-residue polypeptide: Cation-efflux pump FieF (300 aa).

A helical transmembrane segment spans residues 24–44 (LLIKIFAWWYTGSVSILAALV). Zn(2+) contacts are provided by Asp-45 and Asp-49. 2 helical membrane-spanning segments follow: residues 82 to 102 (AALAQSMFISGSALFLFLTSI) and 114 to 134 (PGVGIGVTVIALICTIILVTF). Zn(2+) contacts are provided by His-153 and Asp-157. 2 consecutive transmembrane segments (helical) span residues 156 to 176 (SDVMMNGAILIALGLSWYGWH) and 178 to 198 (ADALFALGIGIYILYSALRMG).

This sequence belongs to the cation diffusion facilitator (CDF) transporter (TC 2.A.4) family. FieF subfamily. Homodimer.

It is found in the cell inner membrane. The catalysed reaction is Zn(2+)(in) + H(+)(out) = Zn(2+)(out) + H(+)(in). The enzyme catalyses Cd(2+)(in) + H(+)(out) = Cd(2+)(out) + H(+)(in). It carries out the reaction Fe(2+)(in) + H(+)(out) = Fe(2+)(out) + H(+)(in). In terms of biological role, divalent metal cation transporter which exports Zn(2+), Cd(2+) and possibly Fe(2+). May be involved in zinc and iron detoxification by efflux. This Salmonella enteritidis PT4 (strain P125109) protein is Cation-efflux pump FieF.